A 793-amino-acid chain; its full sequence is Ankyrin repeat domain-containing protein SOWAHB (793 aa).

Disordered regions lie at residues 83 to 185 (EEGL…QARA), 219 to 290 (ATAE…ELLT), 337 to 360 (QLPLEPGSTEPNSEPPDPCLSSHS), and 396 to 543 (DFVD…SPRV). 3 stretches are compositionally biased toward low complexity: residues 96–108 (APSAGGAAPCSPR), 134–144 (AGAAARAADAA), and 175–185 (AAAAAGAQARA). The residue at position 106 (Ser106) is a Phosphoserine. Positions 220-244 (TAEEKPARALPAQDDRGASREREEG) are enriched in basic and acidic residues. A compositionally biased stretch (low complexity) spans 246 to 273 (LAEPAPVPAVAHSPPATVEAATSRASPP). Ser271 carries the post-translational modification Phosphoserine. Acidic residues predominate over residues 396 to 406 (DFVDQESDGSE). 2 stretches are compositionally biased toward low complexity: residues 407-417 (ESSSGPKDSPG) and 498-508 (RSSLAGRAKLS). Basic residues predominate over residues 521-533 (KRSRRPPRSRKPS). ANK repeat units follow at residues 630-659 (TGYTALHWIAKHGDLRALQDLVSGAKKAGI) and 669-699 (CGYTPLHLAAIHGHQGVIKLLVQRLASRVNV). At Ser761 the chain carries Phosphoserine.

It belongs to the SOWAH family.

This chain is Ankyrin repeat domain-containing protein SOWAHB (SOWAHB), found in Homo sapiens (Human).